We begin with the raw amino-acid sequence, 432 residues long: Enolase (432 aa).

Gln-168 contacts (2R)-2-phosphoglycerate. Catalysis depends on Glu-210, which acts as the Proton donor. Mg(2+) contacts are provided by Asp-247, Glu-288, and Asp-315. Positions 340, 369, 370, and 391 each coordinate (2R)-2-phosphoglycerate. Lys-340 serves as the catalytic Proton acceptor.

The protein belongs to the enolase family. It depends on Mg(2+) as a cofactor.

It localises to the cytoplasm. Its subcellular location is the secreted. The protein resides in the cell surface. The catalysed reaction is (2R)-2-phosphoglycerate = phosphoenolpyruvate + H2O. It functions in the pathway carbohydrate degradation; glycolysis; pyruvate from D-glyceraldehyde 3-phosphate: step 4/5. Its function is as follows. Catalyzes the reversible conversion of 2-phosphoglycerate (2-PG) into phosphoenolpyruvate (PEP). It is essential for the degradation of carbohydrates via glycolysis. The chain is Enolase from Microcystis aeruginosa (strain NIES-843 / IAM M-2473).